A 546-amino-acid chain; its full sequence is Hexose transporter HXT10 (546 aa).

Topologically, residues 1–44 are cytoplasmic; sequence MVSSSVSILGTSAKASTSLSRKDEIKLTPETREASLDIPYKPII. A helical membrane pass occupies residues 45 to 65; that stretch reads AYWTVMGLCLMIAFGGFIFGW. Over 66-100 the chain is Extracellular; the sequence is DTGTISGFINQTDFKRRFGELQRDGSFQLSDVRTG. Asparagine 75 is a glycosylation site (N-linked (GlcNAc...) asparagine). The chain crosses the membrane as a helical span at residues 101–121; the sequence is LIVGIFNIGCALGGLTLGRLG. Residues 122-127 lie on the Cytoplasmic side of the membrane; that stretch reads DIYGRK. The helical transmembrane segment at 128–148 threads the bilayer; that stretch reads IGLMCVILVYVVGIVIQIASS. Residues 149–158 are Extracellular-facing; sequence DKWYQYFIGR. Residues 159–179 form a helical membrane-spanning segment; it reads IVSGMGVGGVAVLSPTLISEI. Residues 180–185 are Cytoplasmic-facing; that stretch reads SPKHLR. The chain crosses the membrane as a helical span at residues 186-206; the sequence is GTCVSFYQLMITLGIFLGYCT. Residues 207–220 are Extracellular-facing; that stretch reads NYGTKKYSNSIQWR. Residues 221–241 traverse the membrane as a helical segment; sequence VPLGLCFAWAIFMVIGMVMVP. Topologically, residues 242–324 are cytoplasmic; the sequence is ESPRYLVEKG…IQSLQQLTGC (83 aa). A helical membrane pass occupies residues 325-341; that stretch reads NYFFYYGTTIFNAVGMQ. Over 342–347 the chain is Extracellular; the sequence is DSFETS. Residues 348–365 form a helical membrane-spanning segment; that stretch reads IVLGAVNFASTFVALYIV. The Cytoplasmic portion of the chain corresponds to 366 to 372; sequence DKFGRRK. The chain crosses the membrane as a helical span at residues 373–393; that stretch reads CLLWGSASMAICFVIFATVGV. Topologically, residues 394-415 are extracellular; that stretch reads TRLWPQGKDQPSSQSAGNVMIV. Residues 416 to 436 form a helical membrane-spanning segment; sequence FTCFFIFSFAITWAPIAYVIV. The Cytoplasmic portion of the chain corresponds to 437–453; that stretch reads AETYPLRVKNRAMAIAV. The chain crosses the membrane as a helical span at residues 454 to 474; that stretch reads GANWMWGFLIGFFTPFITRSI. Residue glycine 475 is a topological domain, extracellular. Residues 476–496 form a helical membrane-spanning segment; sequence FSYGYVFMGCLIFSYFYVFFF. Over 497-546 the chain is Cytoplasmic; sequence VCETKGLTLEEVNEMYEERIKPWKSGGWIPSSRRTPQPTSSTPLVIVDSK.

It belongs to the major facilitator superfamily. Sugar transporter (TC 2.A.1.1) family.

Its subcellular location is the membrane. Functionally, probable glucose transporter. This is Hexose transporter HXT10 (HXT10) from Saccharomyces cerevisiae (strain ATCC 204508 / S288c) (Baker's yeast).